Reading from the N-terminus, the 341-residue chain is UPF0324 membrane protein SMU_2059c (341 aa).

Helical transmembrane passes span 7–24 (KLSGLVLCFLIALPAWFL), 28–47 (FPLVGAPVFAIFLGMLLAIF), 68–85 (FAVVLLGFGLNLSQVLTV), 90–107 (LPIIVATISSSLLLAFLL), 120–142 (LVGVGSSICGGSAIAATAPVIQA), 147–169 (IAQSISVIFLFNILAALIFPTLG), 178–200 (GFALFAGTAVNDTSSVTATAAAW), 211–233 (GATIVKLTRTLAIIPITLGLSFY), 254–276 (VFPMFILYFILASIITTILTALG), 291–310 (FCIVMAMGAIGLNTNIVKLV), and 317–339 (IVLGASCWIVITLVSLGMQHLLG).

The protein belongs to the UPF0324 family.

Its subcellular location is the cell membrane. This chain is UPF0324 membrane protein SMU_2059c, found in Streptococcus mutans serotype c (strain ATCC 700610 / UA159).